The sequence spans 179 residues: MKQFLDFLPLVVFFAFYKIYDIYAATAALIVATAIVLIYSWVRFRKVEKMALITFVLVVVFGGLTLFFHNDEFIKWKVTVIYALFAGALLVSQWVMKKPLIQRMLGKELTLPQSVWSKLNLAWAVFFILCGLANIYIAFWLPQNIWVNFKVFGLTALTLIFTLLSGIYIYRHMPQEDKS.

A run of 5 helical transmembrane segments spans residues 22–42, 50–70, 76–96, 121–141, and 149–169; these read IYAA…YSWV, MALI…FFHN, WKVT…QWVM, LAWA…AFWL, and FKVF…GIYI.

Belongs to the YciB family.

The protein localises to the cell inner membrane. Functionally, plays a role in cell envelope biogenesis, maintenance of cell envelope integrity and membrane homeostasis. This chain is Inner membrane-spanning protein YciB, found in Escherichia coli O127:H6 (strain E2348/69 / EPEC).